Consider the following 130-residue polypeptide: Large ribosomal subunit protein eL32 (130 aa).

Belongs to the eukaryotic ribosomal protein eL32 family. In terms of assembly, part of the 50S ribosomal subunit.

This chain is Large ribosomal subunit protein eL32, found in Pyrococcus furiosus (strain ATCC 43587 / DSM 3638 / JCM 8422 / Vc1).